The following is a 934-amino-acid chain: ATP-dependent RNA helicase dbp10 (934 aa).

A disordered region spans residues 1–57 (MPHRAASPAMSENEFDITGALFQNDSDSDNEQPSAKSKRQPPKKVPSQALDFLGDVN). A compositionally biased stretch (polar residues) spans 21 to 35 (LFQNDSDSDNEQPSA). The Q motif signature appears at 90 to 118 (GGFQAMGLSANLLKAIARKGFSVPTPIQR). The Helicase ATP-binding domain occupies 121-293 (IPVIMDDQDV…RAGLQEPTLV (173 aa)). ATP is bound at residue 134–141 (ARTGSGKT). The DEAD box signature appears at 241–244 (DEAD). The segment at 334–358 (GPTEVSQQRKEEDASAKNWKNKKRK) is disordered. The 155-residue stretch at 361–515 (EMEKAVNMRE…QVNFAEDVVT (155 aa)) folds into the Helicase C-terminal domain. The span at 639 to 654 (LESKKKRAQANEKSEF) shows a compositional bias: basic and acidic residues. Disordered stretches follow at residues 639–688 (LESK…PTGV) and 854–934 (AISG…SRKK). A compositionally biased stretch (acidic residues) spans 669–684 (GENENEGAFSDEDDDV). Basic and acidic residues-rich tracts occupy residues 865-893 (EQAP…ERAM) and 903-915 (GKSE…DIRI). The segment covering 916 to 934 (ARKLKQKRREKNARPSRKK) has biased composition (basic residues).

Belongs to the DEAD box helicase family. DDX54/DBP10 subfamily.

The protein localises to the nucleus. It localises to the nucleolus. It carries out the reaction ATP + H2O = ADP + phosphate + H(+). In terms of biological role, ATP-binding RNA helicase involved in the biogenesis of 60S ribosomal subunits and is required for the normal formation of 25S and 5.8S rRNAs. In Neosartorya fischeri (strain ATCC 1020 / DSM 3700 / CBS 544.65 / FGSC A1164 / JCM 1740 / NRRL 181 / WB 181) (Aspergillus fischerianus), this protein is ATP-dependent RNA helicase dbp10 (dbp10).